The following is a 269-amino-acid chain: Sushi domain-containing protein 3 (269 aa).

The segment at 1–23 (MRRTSATLRGRARPRWRAGNTTP) is disordered. At 1–103 (MRRTSATLRG…VPPHETFGFK (103 aa)) the chain is on the extracellular side. One can recognise a Sushi domain in the interval 30–93 (GTCAQLHPPP…WSSGSPVCKA (64 aa)). 2 cysteine pairs are disulfide-bonded: C32/C75 and C61/C91. Residues 104–124 (VAVIASIVSCAIILLMSMAFL) traverse the membrane as a helical segment. The Cytoplasmic portion of the chain corresponds to 125-269 (TCCLLKCVQK…PGRPKVYLPG (145 aa)). A disordered region spans residues 171–237 (NNSSSVGGGN…RMGTPGPGGC (67 aa)). Residues 176 to 190 (VGGGNGGPSGGGGKP) are compositionally biased toward gly residues.

It is found in the cell membrane. The protein is Sushi domain-containing protein 3 (Susd3) of Mus musculus (Mouse).